Here is a 947-residue protein sequence, read N- to C-terminus: Bifunctional glutamine synthetase adenylyltransferase/adenylyl-removing enzyme (947 aa).

The tract at residues 1–440 (MTPLSSPLSQ…VFNELIGDDE (440 aa)) is adenylyl removase. Residues 450 to 947 (SEPWREVWQD…ASWRKWLVAV (498 aa)) are adenylyl transferase.

It belongs to the GlnE family. The cofactor is Mg(2+).

The catalysed reaction is [glutamine synthetase]-O(4)-(5'-adenylyl)-L-tyrosine + phosphate = [glutamine synthetase]-L-tyrosine + ADP. The enzyme catalyses [glutamine synthetase]-L-tyrosine + ATP = [glutamine synthetase]-O(4)-(5'-adenylyl)-L-tyrosine + diphosphate. Its function is as follows. Involved in the regulation of glutamine synthetase GlnA, a key enzyme in the process to assimilate ammonia. When cellular nitrogen levels are high, the C-terminal adenylyl transferase (AT) inactivates GlnA by covalent transfer of an adenylyl group from ATP to specific tyrosine residue of GlnA, thus reducing its activity. Conversely, when nitrogen levels are low, the N-terminal adenylyl removase (AR) activates GlnA by removing the adenylyl group by phosphorolysis, increasing its activity. The regulatory region of GlnE binds the signal transduction protein PII (GlnB) which indicates the nitrogen status of the cell. The chain is Bifunctional glutamine synthetase adenylyltransferase/adenylyl-removing enzyme from Salmonella enteritidis PT4 (strain P125109).